Reading from the N-terminus, the 261-residue chain is 3-methyl-2-oxobutanoate hydroxymethyltransferase (261 aa).

Mg(2+)-binding residues include Asp47 and Asp86. 3-methyl-2-oxobutanoate-binding positions include 47 to 48 (DS), Asp86, and Lys116. Position 118 (Glu118) interacts with Mg(2+). The active-site Proton acceptor is Glu186.

It belongs to the PanB family. Homodecamer; pentamer of dimers. The cofactor is Mg(2+).

Its subcellular location is the cytoplasm. It catalyses the reaction 3-methyl-2-oxobutanoate + (6R)-5,10-methylene-5,6,7,8-tetrahydrofolate + H2O = 2-dehydropantoate + (6S)-5,6,7,8-tetrahydrofolate. It participates in cofactor biosynthesis; (R)-pantothenate biosynthesis; (R)-pantoate from 3-methyl-2-oxobutanoate: step 1/2. Functionally, catalyzes the reversible reaction in which hydroxymethyl group from 5,10-methylenetetrahydrofolate is transferred onto alpha-ketoisovalerate to form ketopantoate. This is 3-methyl-2-oxobutanoate hydroxymethyltransferase from Thermosynechococcus vestitus (strain NIES-2133 / IAM M-273 / BP-1).